A 422-amino-acid chain; its full sequence is Probable protein phosphatase 2C 69 (422 aa).

The PPM-type phosphatase domain maps to 45-294; the sequence is TLLLAEAGER…DDTTCIVVDI (250 aa). Mn(2+)-binding residues include D70, G71, D246, and D285.

The protein belongs to the PP2C family. The cofactor is Mg(2+). Requires Mn(2+) as cofactor.

It carries out the reaction O-phospho-L-seryl-[protein] + H2O = L-seryl-[protein] + phosphate. It catalyses the reaction O-phospho-L-threonyl-[protein] + H2O = L-threonyl-[protein] + phosphate. This Oryza sativa subsp. japonica (Rice) protein is Probable protein phosphatase 2C 69.